The primary structure comprises 615 residues: MAHLSLYCLLSVSLLQLVASSGVFELKVHSFSTTRRFCRRTRDCNIFFRICLKHSEDVISAEPPCTFGTGQTSVLRADQSSIASSAAIRVPFHFKWPGTFSLIIEAWNAESPKEHHDYTENQNNLISRLATRRRLAVGEDWSQDVHFGDQSELRYSYHVFCDEFYFGEACSDYCRPRDDTLGHYTCDENGNKECLVGWQGDYCSDPICSSDCSERHGYCESPGECKCRLGWQGPSCSECVHYPGCLHGTCSQPWQCVCKEGWGGLFCNQDLNYCTNHKPCANGATCTNTGQGSYTCTCRPGFGGTNCELEINECDCNPCKNGGSCNDLENDYSCTCPQGFYGKNCEIIAMTCADDPCFNGGTCEEKFTGGYVCRCPPTFTGSNCEKRLDRCSHKPCANGGECVDLGASALCRCRPGFSGSRCETNIDDCARYPCQNAGTCQDGINDYTCTCTLGFTGKNCSLRADACLTNPCLHGGTCFTHFSGPVCQCVPGFMGSTCEFPVQASLEKMAPRVGQTSPSAVAVSCVLGVLAVFLGVCVGLVVLRRRRHRLRRQQLCDSVFNDLETVNNLDRQHYPYDRDFSQVKPCNTEGRISLAASHTLPAGQEFLWSAGGGLR.

Positions 1 to 20 (MAHLSLYCLLSVSLLQLVAS) are cleaved as a signal peptide. Residues 21 to 522 (SGVFELKVHS…VGQTSPSAVA (502 aa)) lie on the Extracellular side of the membrane. The 45-residue stretch at 159–203 (VFCDEFYFGEACSDYCRPRDDTLGHYTCDENGNKECLVGWQGDYC) folds into the DSL domain. Cystine bridges form between Cys-161-Cys-170, Cys-174-Cys-186, Cys-194-Cys-203, Cys-208-Cys-219, Cys-212-Cys-225, Cys-227-Cys-236, Cys-245-Cys-250, Cys-258-Cys-267, Cys-274-Cys-286, Cys-280-Cys-296, Cys-298-Cys-307, Cys-314-Cys-325, Cys-319-Cys-334, Cys-336-Cys-345, Cys-352-Cys-363, Cys-357-Cys-373, Cys-375-Cys-384, Cys-391-Cys-402, Cys-396-Cys-411, Cys-413-Cys-422, Cys-429-Cys-440, Cys-434-Cys-449, Cys-451-Cys-460, Cys-467-Cys-478, Cys-472-Cys-487, and Cys-489-Cys-498. 3 EGF-like domains span residues 204–237 (SDPI…PSCS), 241–268 (HYPG…LFCN), and 270–308 (DLNY…TNCE). The EGF-like 4; calcium-binding domain maps to 310–346 (EINECDCNPCKNGGSCNDLENDYSCTCPQGFYGKNCE). EGF-like domains lie at 348–385 (IAMT…SNCE) and 387–423 (RLDR…SRCE). The EGF-like 7; calcium-binding domain occupies 425-461 (NIDDCARYPCQNAGTCQDGINDYTCTCTLGFTGKNCS). Asn-459 carries an N-linked (GlcNAc...) asparagine glycan. The EGF-like 8 domain maps to 463-499 (RADACLTNPCLHGGTCFTHFSGPVCQCVPGFMGSTCE). A helical membrane pass occupies residues 523–543 (VSCVLGVLAVFLGVCVGLVVL). Residues 544–615 (RRRRHRLRRQ…FLWSAGGGLR (72 aa)) lie on the Cytoplasmic side of the membrane.

Post-translationally, ubiquitinated by mib, leading to its endocytosis and subsequent degradation.

The protein localises to the membrane. Functionally, acts as a ligand for Notch receptors and is involved in primary neurogenesis. Can activate Notch receptors, thereby playing a key role in lateral inhibition, a process that prevents the immediate neighbors of each nascent neural cell from simultaneously embarking on neural differentiation. The polypeptide is Delta-like protein B (dlb) (Danio rerio (Zebrafish)).